We begin with the raw amino-acid sequence, 109 residues long: Small ribosomal subunit protein bS6 (109 aa).

This sequence belongs to the bacterial ribosomal protein bS6 family.

Binds together with bS18 to 16S ribosomal RNA. The protein is Small ribosomal subunit protein bS6 of Dehalococcoides mccartyi (strain ATCC BAA-2266 / KCTC 15142 / 195) (Dehalococcoides ethenogenes (strain 195)).